Reading from the N-terminus, the 584-residue chain is Aspartate--tRNA(Asp/Asn) ligase (584 aa).

Glutamate 173 provides a ligand contact to L-aspartate. The interval 197 to 200 (QLFK) is aspartate. Arginine 219 is an L-aspartate binding site. Residues 219 to 221 (RDE) and glutamine 228 each bind ATP. Histidine 447 serves as a coordination point for L-aspartate. Residue glutamate 477 participates in ATP binding. Arginine 484 is a binding site for L-aspartate. ATP is bound at residue 529-532 (GFDR).

The protein belongs to the class-II aminoacyl-tRNA synthetase family. Type 1 subfamily. Homodimer.

Its subcellular location is the cytoplasm. It carries out the reaction tRNA(Asx) + L-aspartate + ATP = L-aspartyl-tRNA(Asx) + AMP + diphosphate. Functionally, aspartyl-tRNA synthetase with relaxed tRNA specificity since it is able to aspartylate not only its cognate tRNA(Asp) but also tRNA(Asn). Reaction proceeds in two steps: L-aspartate is first activated by ATP to form Asp-AMP and then transferred to the acceptor end of tRNA(Asp/Asn). This Campylobacter hominis (strain ATCC BAA-381 / DSM 21671 / CCUG 45161 / LMG 19568 / NCTC 13146 / CH001A) protein is Aspartate--tRNA(Asp/Asn) ligase.